A 92-amino-acid chain; its full sequence is RNA-binding protein Hfq (92 aa).

In terms of domain architecture, Sm spans 9–68; it reads DPFLNALRRERVPVSVYLVNGIKLQGTIESFDQFVVLLRNTVSQMVYKHAISTVVPARNV. The interval 73–92 is disordered; the sequence is GGGYVQSNEGNQAEDDDVEQ.

Belongs to the Hfq family. As to quaternary structure, homohexamer.

RNA chaperone that binds small regulatory RNA (sRNAs) and mRNAs to facilitate mRNA translational regulation in response to envelope stress, environmental stress and changes in metabolite concentrations. Also binds with high specificity to tRNAs. This is RNA-binding protein Hfq from Xanthomonas axonopodis pv. citri (strain 306).